Consider the following 812-residue polypeptide: E3 UFM1-protein ligase 1 homolog (812 aa).

Residues 389–495 form a disordered region; that stretch reads IKHSAGQGKP…KTKEDNTNIF (107 aa). Composition is skewed to basic and acidic residues over residues 403 to 415 and 475 to 491; these read SEHRIGSDGKDLG and DAKHGGKKASEKTKEDN.

The protein belongs to the UFL1 family.

Functionally, E3 UFM1-protein ligase that mediates ufmylation of target proteins. This chain is E3 UFM1-protein ligase 1 homolog, found in Oryza sativa subsp. indica (Rice).